The following is a 295-amino-acid chain: Trimeric intracellular cation channel type A (295 aa).

Residues 1–18 lie on the Lumenal side of the membrane; it reads MEVLDVLNLGEIAQYFSK. The chain crosses the membrane as a helical span at residues 19 to 37; sequence MAMFPVFDVAYYIVSILYL. The Cytoplasmic portion of the chain corresponds to 38–51; sequence KYEPGAVEVSRRSP. The helical transmembrane segment at 52–75 threads the bilayer; the sequence is VASWLCAMLYCFGSYILADIMLGV. G74 is a Ca(2+) binding site. At 76–86 the chain is on the lumenal side; it reads CPIDYFHNNSH. The chain crosses the membrane as a helical span at residues 87-106; that stretch reads ILLASAVWYLIFFCPLNLFY. Over 107-144 the chain is Cytoplasmic; that stretch reads KCVAFMPVKLVLVALKEVVRTRKIAAGVHHAHHAYHHG. K122 and R126 together coordinate a 1,2-diacyl-sn-glycero-3-phospho-(1D-myo-inositol-4,5-bisphosphate). The helical transmembrane segment at 145-162 threads the bilayer; the sequence is WLIMVITGYVKGSGVALM. At 163–182 the chain is on the lumenal side; the sequence is SNFEQLLRGVWKPETNEVLN. A helical membrane pass occupies residues 183 to 199; the sequence is MSFPTKASLYGAILFTL. At 200 to 210 the chain is on the cytoplasmic side; sequence QEAHVLPVSKS. A helical membrane pass occupies residues 211-227; it reads TLICLFTLFMVSSKVFM. The Lumenal segment spans residues 228-236; sequence TARHSHGSP. A helical transmembrane segment spans residues 237–255; the sequence is FALIESWVCHVLFGSPLGT. The Cytoplasmic segment spans residues 256–295; the sequence is EDAHDHHHAAPAAAPAPLSPAKNKEELSEGTRKRKSKKAE. Residues 259 to 295 are disordered; it reads HDHHHAAPAAAPAPLSPAKNKEELSEGTRKRKSKKAE. Positions 265–276 are enriched in low complexity; it reads APAAAPAPLSPA. Residues 277 to 286 are compositionally biased toward basic and acidic residues; it reads KNKEELSEGT.

Belongs to the TMEM38 family. As to quaternary structure, homotrimer; conformation seems to be controled by binding to diacylglycerol (DAG).

It localises to the sarcoplasmic reticulum membrane. It is found in the nucleus membrane. It carries out the reaction K(+)(in) = K(+)(out). Channel activity is activated by a change of voltage within the sarcoplasmic reticulum lumen and blocked by luminal high Ca(2+) levels. Functionally, intracellular monovalent cation channel required for maintenance of rapid intracellular calcium release. Acts as a potassium counter-ion channel that functions in synchronization with calcium release from intracellular stores. Opened by a change of voltage within the sarcoplasmic reticulum lumen. The chain is Trimeric intracellular cation channel type A (tmem38a) from Danio rerio (Zebrafish).